The following is a 73-amino-acid chain: Dermaseptin-1 (73 aa).

The first 22 residues, 1–22 (MAFLKKSIFLALFLGMVSLSIC), serve as a signal peptide directing secretion. The propeptide at 23–43 (EEEKRENEGEEEQEDDEQSEM) is removed in mature form. The disordered stretch occupies residues 25 to 46 (EKRENEGEEEQEDDEQSEMKRG). A compositionally biased stretch (acidic residues) spans 30 to 40 (EGEEEQEDDEQ). At leucine 70 the chain carries Leucine amide. Residues 72-73 (EQ) constitute a propeptide, removed in mature form.

In terms of tissue distribution, expressed by the skin glands.

It localises to the secreted. In terms of biological role, has antiparasitic activity against trypomastigote form of T.cruzi (IC(50)=0.68 uM) in vitro but not against L.infantum. Probably acts by permeabilizing cell membranes. In vitro, shows no cytotoxicity against macrophages. Has antibacterial activity. In Pithecopus nordestinus (Northeastern Brazilian leaf frog), this protein is Dermaseptin-1.